A 483-amino-acid polypeptide reads, in one-letter code: Spore germination protein B1 (483 aa).

A run of 5 helical transmembrane segments spans residues 289 to 309 (ILIT…HTGL), 323 to 343 (LNVP…IELI), 353 to 373 (PIGQ…AVQA), 375 to 395 (IVSA…FTVP), and 410 to 430 (VMIS…LFVI).

The protein belongs to the GerABKA family.

It localises to the cell membrane. Functionally, involved in the response to the germinative mixture of L-asparagine, glucose, fructose and potassium ions (AGFK). Cannot stimulate germination in the absence of gerD and gerK gene products (fructose and glucose receptors respectively). This Bacillus subtilis (strain 168) protein is Spore germination protein B1 (gerBA).